A 320-amino-acid chain; its full sequence is Ubiquitin-like domain-containing CTD phosphatase 1 (320 aa).

A Ubiquitin-like domain is found at 6–77; that stretch reads VVVIVKWSGK…LKPNFKLMMV (72 aa). The region spanning 136-296 is the FCP1 homology domain; the sequence is PREGKKLLVL…LKLSDYLRKI (161 aa). Positions 146, 148, and 255 each coordinate Mg(2+).

Requires Mg(2+) as cofactor.

It localises to the nucleus. The catalysed reaction is O-phospho-L-seryl-[protein] + H2O = L-seryl-[protein] + phosphate. It carries out the reaction O-phospho-L-threonyl-[protein] + H2O = L-threonyl-[protein] + phosphate. In terms of biological role, dephosphorylates 26S nuclear proteasomes, thereby decreasing their proteolytic activity. Recruited to the 19S regulatory particle of the 26S proteasome where it dephosphorylates 19S component Rpt1 which impairs Rpt1 ATPase activity and disrupts 26S proteasome assembly. This chain is Ubiquitin-like domain-containing CTD phosphatase 1, found in Drosophila melanogaster (Fruit fly).